The primary structure comprises 218 residues: THAP domain-containing protein 3 (218 aa).

The THAP-type zinc-finger motif lies at 1–82 (MPKSCAARQC…LKHNAVPTVF (82 aa)). Disordered stretches follow at residues 97-120 (GGDS…PEGP) and 133-154 (ATEA…PGQP). Ser100 is subject to Phosphoserine. The short motif at 156-159 (DHSY) is the HCFC1-binding motif (HBM) element.

In terms of assembly, component of a THAP1/THAP3-HCFC1-OGT complex that contains at least, either THAP1 or THAP3, HCFC1 and OGT. Interacts directly with OGT and HCFC1 (via its HBM). In terms of tissue distribution, highest levels in heart, liver and kidney. Lower levels in brain and lung.

Functionally, component of a THAP1/THAP3-HCFC1-OGT complex that is required for the regulation of the transcriptional activity of RRM1. This is THAP domain-containing protein 3 (Thap3) from Mus musculus (Mouse).